We begin with the raw amino-acid sequence, 157 residues long: DNA-binding protein MNB1B (157 aa).

Disordered regions lie at residues 1-45 (MKGA…KRAP), 59-87 (FKEK…SESD), and 109-157 (YNKG…DDDE). 2 stretches are compositionally biased toward basic and acidic residues: residues 10–27 (AKAD…EKPA) and 76–87 (AGDRWKSLSESD). Positions 41–110 (PKRAPSAFFV…EYNKAIAAYN (70 aa)) form a DNA-binding region, HMG box. Composition is skewed to acidic residues over residues 124 to 133 (EEEEEDEEES) and 141 to 157 (NDED…DDDE). Ser-149 carries the post-translational modification Phosphoserine; by CK2.

Expressed in all tissues examined.

The protein localises to the nucleus. Functionally, recognizes an AAGG motif at the MNF1-binding site. In Zea mays (Maize), this protein is DNA-binding protein MNB1B (MNB1B).